Reading from the N-terminus, the 179-residue chain is O-acetyl-ADP-ribose deacetylase (179 aa).

The 175-residue stretch at 1–175 folds into the Macro domain; that stretch reads MTSRLQVIQG…LYARLLTQQG (175 aa). Substrate-binding positions include 11–12, Asn25, 33–35, and 122–126; these read DI, GVD, and STGVY. Residue Asp35 is the Proton acceptor of the active site.

Belongs to the MacroD-type family. YmdB subfamily. Homodimer. Interacts with RNase III.

It catalyses the reaction 3''-O-acetyl-ADP-D-ribose + H2O = ADP-D-ribose + acetate + H(+). The enzyme catalyses 2''-O-acetyl-ADP-D-ribose + H2O = ADP-D-ribose + acetate + H(+). Its function is as follows. Deacetylates O-acetyl-ADP ribose to yield ADP-ribose and free acetate. Down-regulates ribonuclease 3 (RNase III) activity. Acts by interacting directly with the region of the ribonuclease that is required for dimerization/activation. This chain is O-acetyl-ADP-ribose deacetylase, found in Salmonella typhi.